The chain runs to 321 residues: Ribose-phosphate pyrophosphokinase 1 (321 aa).

Residues Asp131, His133, Asp142, and Asp146 each contribute to the Mg(2+) site.

The protein belongs to the ribose-phosphate pyrophosphokinase family.

It catalyses the reaction D-ribose 5-phosphate + ATP = 5-phospho-alpha-D-ribose 1-diphosphate + AMP + H(+). The sequence is that of Ribose-phosphate pyrophosphokinase 1 (PRS1) from Candida albicans (Yeast).